A 187-amino-acid polypeptide reads, in one-letter code: Hypoxanthine/guanine phosphoribosyltransferase (187 aa).

The protein belongs to the purine/pyrimidine phosphoribosyltransferase family. Archaeal HPRT subfamily. As to quaternary structure, homodimer.

The protein localises to the cytoplasm. The catalysed reaction is IMP + diphosphate = hypoxanthine + 5-phospho-alpha-D-ribose 1-diphosphate. The enzyme catalyses GMP + diphosphate = guanine + 5-phospho-alpha-D-ribose 1-diphosphate. It participates in purine metabolism; IMP biosynthesis via salvage pathway; IMP from hypoxanthine: step 1/1. Its function is as follows. Catalyzes a salvage reaction resulting in the formation of IMP that is energically less costly than de novo synthesis. In Methanopyrus kandleri (strain AV19 / DSM 6324 / JCM 9639 / NBRC 100938), this protein is Hypoxanthine/guanine phosphoribosyltransferase.